We begin with the raw amino-acid sequence, 372 residues long: Cobalt-precorrin-5B C(1)-methyltransferase (372 aa).

This sequence belongs to the CbiD family.

The catalysed reaction is Co-precorrin-5B + S-adenosyl-L-methionine = Co-precorrin-6A + S-adenosyl-L-homocysteine. It participates in cofactor biosynthesis; adenosylcobalamin biosynthesis; cob(II)yrinate a,c-diamide from sirohydrochlorin (anaerobic route): step 6/10. Its function is as follows. Catalyzes the methylation of C-1 in cobalt-precorrin-5B to form cobalt-precorrin-6A. In Geobacillus thermodenitrificans (strain NG80-2), this protein is Cobalt-precorrin-5B C(1)-methyltransferase.